We begin with the raw amino-acid sequence, 710 residues long: Putative membrane protein IgaA homolog (710 aa).

Met-1 is a topological domain (periplasmic). The chain crosses the membrane as a helical span at residues 2–22; it reads STILIFIAALLACSLLAIWRF. Residues 23–204 lie on the Cytoplasmic side of the membrane; that stretch reads RVKSRRGSLP…YALSRPAGLR (182 aa). 2 consecutive transmembrane segments (helical) span residues 205–225 and 226–246; these read EALL…TPDV and FVPW…WGLF. Over 247–339 the chain is Cytoplasmic; sequence APPSKSALRE…KNFPLQHWLR (93 aa). Residues 340-360 traverse the membrane as a helical segment; it reads STVIAIGSLLVLFMLLFWIPL. Topologically, residues 361–656 are periplasmic; the sequence is DMPIKFTLSW…PDKSGWWRYL (296 aa). A helical transmembrane segment spans residues 657–677; sequence GTTLLMLAMIVSAVYNGIQAF. Over 678-710 the chain is Cytoplasmic; sequence RRYQRHRTRMADIQEYYESCLNPRLTVSPENLI.

Belongs to the IgaA family.

The protein resides in the cell inner membrane. The polypeptide is Putative membrane protein IgaA homolog (yrfF) (Salmonella typhi).